A 270-amino-acid chain; its full sequence is Bark lectin (270 aa).

Positions 1 to 15 (ISITFFLLLLNKVNS) are cleaved as a signal peptide. N-linked (GlcNAc...) asparagine glycans are attached at residues Asn-60, Asn-76, and Asn-127. Mn(2+) is bound by residues Glu-141 and Asp-143. Residues Asp-143, His-145, Asn-147, and Asp-150 each contribute to the Ca(2+) site. Mn(2+) contacts are provided by Asp-150 and His-155. Asn-201 carries an N-linked (GlcNAc...) asparagine glycan.

This sequence belongs to the leguminous lectin family.

Functionally, galNAc-specific lectin. The chain is Bark lectin from Styphnolobium japonicum (Japanese pagoda tree).